We begin with the raw amino-acid sequence, 228 residues long: R-spondin-4 (228 aa).

The first 19 residues, 1 to 19 (MRAPLCLLLLLAHAVDMLA), serve as a signal peptide directing secretion. A glycan (N-linked (GlcNAc...) asparagine) is linked at Asn-34. Disulfide bonds link Cys-35-Cys-41, Cys-38-Cys-47, Cys-50-Cys-69, Cys-73-Cys-88, Cys-91-Cys-98, Cys-95-Cys-104, Cys-107-Cys-118, Cys-122-Cys-135, Cys-139-Cys-181, Cys-150-Cys-157, and Cys-190-Cys-196. One copy of the FU repeat lies at 85–128 (ANRCKKCGATCESCFSQDFCIRCKRRFHLYKGKCLPSCPPGTLT). The TSP type-1 domain maps to 138 to 197 (ECEPSPWGSWSPCIHNGKTCGSGWGLETRVREAGPAKQEETASCRVLSESRKCPIKRLCP). The tract at residues 193–228 (KRLCPGERNPRQKNRKDRRQRKDRKLERRPHQRGSQ) is disordered. The segment covering 203 to 228 (RQKNRKDRRQRKDRKLERRPHQRGSQ) has biased composition (basic residues).

It belongs to the R-spondin family. Binds heparin. Interacts with LGR4, LGR5 and LGR6.

It is found in the secreted. Its function is as follows. Activator of the canonical Wnt signaling pathway by acting as a ligand for LGR4-6 receptors. Upon binding to LGR4-6 (LGR4, LGR5 or LGR6), LGR4-6 associate with phosphorylated LRP6 and frizzled receptors that are activated by extracellular Wnt receptors, triggering the canonical Wnt signaling pathway to increase expression of target genes. Also regulates the canonical Wnt/beta-catenin-dependent pathway and non-canonical Wnt signaling by acting as an inhibitor of ZNRF3, an important regulator of the Wnt signaling pathway. The polypeptide is R-spondin-4 (Rspo4) (Mus musculus (Mouse)).